The following is a 70-amino-acid chain: uncharacterized protein (70 aa).

The HTH cro/C1-type domain maps to 5 to 59 (IREFRAKYGMTQEELAKKVGVRRETIVFLEKGKYNPSLRLAYKIARVFNARIEDL). The H-T-H motif DNA-binding region spans 16-35 (QEELAKKVGVRRETIVFLEK).

This is an uncharacterized protein from Archaeoglobus fulgidus (strain ATCC 49558 / DSM 4304 / JCM 9628 / NBRC 100126 / VC-16).